The following is a 173-amino-acid chain: Photosystem I assembly protein Ycf3 (173 aa).

TPR repeat units lie at residues 35–68 (AYIY…EENP), 72–105 (GETL…NPKQ), and 120–153 (GRSA…YPGG).

It belongs to the Ycf3 family.

The protein resides in the cellular thylakoid membrane. In terms of biological role, essential for the assembly of the photosystem I (PSI) complex. May act as a chaperone-like factor to guide the assembly of the PSI subunits. The protein is Photosystem I assembly protein Ycf3 of Prochlorococcus marinus (strain MIT 9211).